Here is a 503-residue protein sequence, read N- to C-terminus: ATP synthase subunit alpha (503 aa).

170 to 177 (GDKQTGKT) is an ATP binding site.

It belongs to the ATPase alpha/beta chains family. F-type ATPases have 2 components, CF(1) - the catalytic core - and CF(0) - the membrane proton channel. CF(1) has five subunits: alpha(3), beta(3), gamma(1), delta(1), epsilon(1). CF(0) has three main subunits: a(1), b(2) and c(9-12). The alpha and beta chains form an alternating ring which encloses part of the gamma chain. CF(1) is attached to CF(0) by a central stalk formed by the gamma and epsilon chains, while a peripheral stalk is formed by the delta and b chains.

The protein resides in the cell inner membrane. The catalysed reaction is ATP + H2O + 4 H(+)(in) = ADP + phosphate + 5 H(+)(out). Functionally, produces ATP from ADP in the presence of a proton gradient across the membrane. The alpha chain is a regulatory subunit. This is ATP synthase subunit alpha from Helicobacter pylori (strain Shi470).